An 878-amino-acid polypeptide reads, in one-letter code: Alanine--tRNA ligase (878 aa).

Zn(2+)-binding residues include H566, H570, C668, and H672.

The protein belongs to the class-II aminoacyl-tRNA synthetase family. It depends on Zn(2+) as a cofactor.

The protein localises to the cytoplasm. The enzyme catalyses tRNA(Ala) + L-alanine + ATP = L-alanyl-tRNA(Ala) + AMP + diphosphate. In terms of biological role, catalyzes the attachment of alanine to tRNA(Ala) in a two-step reaction: alanine is first activated by ATP to form Ala-AMP and then transferred to the acceptor end of tRNA(Ala). Also edits incorrectly charged Ser-tRNA(Ala) and Gly-tRNA(Ala) via its editing domain. The chain is Alanine--tRNA ligase from Bacillus subtilis (strain 168).